We begin with the raw amino-acid sequence, 506 residues long: 2-isopropylmalate synthase (506 aa).

The region spanning 4–266 (ILFMDTTLRD…EPSMTLKEIK (263 aa)) is the Pyruvate carboxyltransferase domain. The Mn(2+) site is built by Asp13, His201, His203, and Asn237. The regulatory domain stretch occupies residues 390-506 (NITQLQVHFV…KLKSFIQLVK (117 aa)).

The protein belongs to the alpha-IPM synthase/homocitrate synthase family. LeuA type 1 subfamily. As to quaternary structure, homodimer. Requires Mn(2+) as cofactor.

The protein localises to the cytoplasm. The enzyme catalyses 3-methyl-2-oxobutanoate + acetyl-CoA + H2O = (2S)-2-isopropylmalate + CoA + H(+). It participates in amino-acid biosynthesis; L-leucine biosynthesis; L-leucine from 3-methyl-2-oxobutanoate: step 1/4. Catalyzes the condensation of the acetyl group of acetyl-CoA with 3-methyl-2-oxobutanoate (2-ketoisovalerate) to form 3-carboxy-3-hydroxy-4-methylpentanoate (2-isopropylmalate). This is 2-isopropylmalate synthase from Bacillus cereus (strain 03BB102).